The primary structure comprises 353 residues: Outer membrane protein P2 (353 aa).

A signal peptide spans 1–20; it reads MKKTLAALIVGAFAASAANA.

This sequence belongs to the Gram-negative porin family. As to quaternary structure, homotrimer.

Its subcellular location is the cell outer membrane. Functionally, forms pores that allow passive diffusion of small molecules across the outer membrane. The protein is Outer membrane protein P2 (ompP2) of Haemophilus influenzae.